The chain runs to 401 residues: 1-deoxy-D-xylulose 5-phosphate reductoisomerase (401 aa).

Residues Thr11, Gly12, Ser13, Ile14, Arg38, Asn39, and Asn125 each coordinate NADPH. Lys126 contributes to the 1-deoxy-D-xylulose 5-phosphate binding site. An NADPH-binding site is contributed by Glu127. Asp151 is a binding site for Mn(2+). 4 residues coordinate 1-deoxy-D-xylulose 5-phosphate: Ser152, Glu153, Ser179, and His202. Glu153 is a binding site for Mn(2+). Gly208 lines the NADPH pocket. Ser215, Asn220, Lys221, and Glu224 together coordinate 1-deoxy-D-xylulose 5-phosphate. Glu224 lines the Mn(2+) pocket.

This sequence belongs to the DXR family. The cofactor is Mg(2+). Requires Mn(2+) as cofactor.

The enzyme catalyses 2-C-methyl-D-erythritol 4-phosphate + NADP(+) = 1-deoxy-D-xylulose 5-phosphate + NADPH + H(+). Its pathway is isoprenoid biosynthesis; isopentenyl diphosphate biosynthesis via DXP pathway; isopentenyl diphosphate from 1-deoxy-D-xylulose 5-phosphate: step 1/6. Catalyzes the NADPH-dependent rearrangement and reduction of 1-deoxy-D-xylulose-5-phosphate (DXP) to 2-C-methyl-D-erythritol 4-phosphate (MEP). The sequence is that of 1-deoxy-D-xylulose 5-phosphate reductoisomerase from Paraburkholderia phytofirmans (strain DSM 17436 / LMG 22146 / PsJN) (Burkholderia phytofirmans).